The primary structure comprises 256 residues: Necrosis-inducing protein NPP1 (256 aa).

Residues 111–121 (AIMYAWYFPKG) carry the Conserved undecapeptide motif motif. The Conserved heptapeptide motif signature appears at 133 to 139 (GHRHEWE).

The protein belongs to the Necrosis inducing protein (NPP1) family.

The protein localises to the secreted. Functionally, secreted effector that acts as a pathogen-associated molecular pattern (PAMP) recognized by the plant immune system. This Phytophthora cinnamomi (Cinnamon fungus) protein is Necrosis-inducing protein NPP1.